A 694-amino-acid polypeptide reads, in one-letter code: MAREYKIEDYRNFGIMAHIDAGKTTMTERILFYTGKNHKIGETHDGASTMDWMEQEQERGITITSAATTTFWKGPDGRKRRFNIIDTPGHVDFTIEVERSLRVLDGAIALLDANAGVEPQTETVWRQAEKYRVPRMVFVNKMDKIGADFYRSVEMVGSRLGAKALVLQLPIGAENDFEGVVDLVYMRALRWDGSIGAPATVSEIPSDLKEKAEEYREKLIEMAVEVDEVATESYLEGVMPTDEQLVALIRKGTIEVQFHPVLCGTAFKNKGVQPLLDAVISYLPSPVDVPAISGIDVKTEDEVTRESSDDAPLSMLAFKIMNDPFVGSLTFCRIYSGKVQKGISLENTVKKKRERLGRMLQMHSNSREDIEEAFAGDIVALAGLKETTTGDTLCDPLRPVVLERMEFPEPVIEIAIEPKTKADQEKMGIALNRLAAEDPSFRVKSDEESGQTIIAGMGELHLDIIVDRMRREFKVEANIGQPQVAYRESITKAAEIDYTHKKQSGGAGQFARVKIIFEPHDGDDFIFESKIVGGAVPKEYIPGVQKGIESVMGSGPLAGFPMLGVKATLVDGGYHDVDSSVLAFEIAARAAFRDGAKKAGAQLLEPIMKVEVVTPEDYVGDVIGDLNSRRGQISGTEARSVSTVVNAMVPLANMFGYVNSLRSMSQGRAQYTMQFDHYEPVPSAVALEIQKKYA.

The 280-residue stretch at 8-287 (EDYRNFGIMA…AVISYLPSPV (280 aa)) folds into the tr-type G domain. Residues 17–24 (AHIDAGKT), 86–90 (DTPGH), and 140–143 (NKMD) contribute to the GTP site.

The protein belongs to the TRAFAC class translation factor GTPase superfamily. Classic translation factor GTPase family. EF-G/EF-2 subfamily.

Its subcellular location is the cytoplasm. In terms of biological role, catalyzes the GTP-dependent ribosomal translocation step during translation elongation. During this step, the ribosome changes from the pre-translocational (PRE) to the post-translocational (POST) state as the newly formed A-site-bound peptidyl-tRNA and P-site-bound deacylated tRNA move to the P and E sites, respectively. Catalyzes the coordinated movement of the two tRNA molecules, the mRNA and conformational changes in the ribosome. This is Elongation factor G from Bartonella quintana (strain Toulouse) (Rochalimaea quintana).